The sequence spans 141 residues: Large-conductance mechanosensitive channel (141 aa).

The next 2 helical transmembrane spans lie at 16-36 and 83-103; these read VIDL…VDSL and GAFI…FVAI.

It belongs to the MscL family. As to quaternary structure, homopentamer.

It is found in the cell inner membrane. In terms of biological role, channel that opens in response to stretch forces in the membrane lipid bilayer. May participate in the regulation of osmotic pressure changes within the cell. This Azoarcus sp. (strain BH72) protein is Large-conductance mechanosensitive channel.